A 332-amino-acid polypeptide reads, in one-letter code: ADP-L-glycero-D-manno-heptose-6-epimerase (332 aa).

NADP(+) is bound by residues 10 to 11 (MI), 31 to 32 (DK), lysine 38, lysine 53, 75 to 79 (MGACS), and asparagine 92. Catalysis depends on tyrosine 145, which acts as the Proton acceptor. Position 149 (lysine 149) interacts with NADP(+). Asparagine 173 contributes to the substrate binding site. NADP(+) is bound by residues valine 174 and lysine 182. The Proton acceptor role is filled by lysine 182. Residues arginine 184, histidine 191, 205 to 208 (FKSY), arginine 219, and tyrosine 290 each bind substrate.

It belongs to the NAD(P)-dependent epimerase/dehydratase family. HldD subfamily. Homopentamer. The cofactor is NADP(+).

It carries out the reaction ADP-D-glycero-beta-D-manno-heptose = ADP-L-glycero-beta-D-manno-heptose. Its pathway is nucleotide-sugar biosynthesis; ADP-L-glycero-beta-D-manno-heptose biosynthesis; ADP-L-glycero-beta-D-manno-heptose from D-glycero-beta-D-manno-heptose 7-phosphate: step 4/4. In terms of biological role, catalyzes the interconversion between ADP-D-glycero-beta-D-manno-heptose and ADP-L-glycero-beta-D-manno-heptose via an epimerization at carbon 6 of the heptose. The chain is ADP-L-glycero-D-manno-heptose-6-epimerase from Fusobacterium nucleatum subsp. nucleatum (strain ATCC 25586 / DSM 15643 / BCRC 10681 / CIP 101130 / JCM 8532 / KCTC 2640 / LMG 13131 / VPI 4355).